The sequence spans 237 residues: Phosphoribosylaminoimidazole-succinocarboxamide synthase (237 aa).

Belongs to the SAICAR synthetase family.

It catalyses the reaction 5-amino-1-(5-phospho-D-ribosyl)imidazole-4-carboxylate + L-aspartate + ATP = (2S)-2-[5-amino-1-(5-phospho-beta-D-ribosyl)imidazole-4-carboxamido]succinate + ADP + phosphate + 2 H(+). It participates in purine metabolism; IMP biosynthesis via de novo pathway; 5-amino-1-(5-phospho-D-ribosyl)imidazole-4-carboxamide from 5-amino-1-(5-phospho-D-ribosyl)imidazole-4-carboxylate: step 1/2. The chain is Phosphoribosylaminoimidazole-succinocarboxamide synthase from Photorhabdus laumondii subsp. laumondii (strain DSM 15139 / CIP 105565 / TT01) (Photorhabdus luminescens subsp. laumondii).